A 330-amino-acid chain; its full sequence is Aspartate--ammonia ligase (330 aa).

The protein belongs to the class-II aminoacyl-tRNA synthetase family. AsnA subfamily.

Its subcellular location is the cytoplasm. It catalyses the reaction L-aspartate + NH4(+) + ATP = L-asparagine + AMP + diphosphate + H(+). It functions in the pathway amino-acid biosynthesis; L-asparagine biosynthesis; L-asparagine from L-aspartate (ammonia route): step 1/1. This chain is Aspartate--ammonia ligase, found in Escherichia coli O7:K1 (strain IAI39 / ExPEC).